The sequence spans 291 residues: Small ribosomal subunit protein uS2 (291 aa).

The span at 238–247 (DEESGDELDE) shows a compositional bias: acidic residues. The interval 238–291 (DEESGDELDESVSLHEEGREITDYENYTPPEEREYSVNDEGDVFDEDESLYEGR) is disordered. Positions 249 to 259 (VSLHEEGREIT) are enriched in basic and acidic residues. Residues 274-291 (VNDEGDVFDEDESLYEGR) show a composition bias toward acidic residues.

Belongs to the universal ribosomal protein uS2 family.

The protein is Small ribosomal subunit protein uS2 (rpsB) of Treponema pallidum (strain Nichols).